The following is a 347-amino-acid chain: Phenylalanine--tRNA ligase alpha subunit (347 aa).

Glu261 lines the Mg(2+) pocket.

Belongs to the class-II aminoacyl-tRNA synthetase family. Phe-tRNA synthetase alpha subunit type 1 subfamily. In terms of assembly, tetramer of two alpha and two beta subunits. The cofactor is Mg(2+).

It localises to the cytoplasm. It catalyses the reaction tRNA(Phe) + L-phenylalanine + ATP = L-phenylalanyl-tRNA(Phe) + AMP + diphosphate + H(+). The chain is Phenylalanine--tRNA ligase alpha subunit from Streptococcus pyogenes serotype M3 (strain ATCC BAA-595 / MGAS315).